Here is a 243-residue protein sequence, read N- to C-terminus: 3-deoxy-manno-octulosonate cytidylyltransferase (243 aa).

This sequence belongs to the KdsB family.

It is found in the cytoplasm. The enzyme catalyses 3-deoxy-alpha-D-manno-oct-2-ulosonate + CTP = CMP-3-deoxy-beta-D-manno-octulosonate + diphosphate. The protein operates within nucleotide-sugar biosynthesis; CMP-3-deoxy-D-manno-octulosonate biosynthesis; CMP-3-deoxy-D-manno-octulosonate from 3-deoxy-D-manno-octulosonate and CTP: step 1/1. Its pathway is bacterial outer membrane biogenesis; lipopolysaccharide biosynthesis. Its function is as follows. Activates KDO (a required 8-carbon sugar) for incorporation into bacterial lipopolysaccharide in Gram-negative bacteria. The polypeptide is 3-deoxy-manno-octulosonate cytidylyltransferase (Helicobacter pylori (strain P12)).